The chain runs to 142 residues: Universal stress protein C (142 aa).

It belongs to the universal stress protein A family.

It localises to the cytoplasm. Required for resistance to DNA-damaging agents. The sequence is that of Universal stress protein C (uspC) from Escherichia coli O6:H1 (strain CFT073 / ATCC 700928 / UPEC).